The primary structure comprises 208 residues: Uracil phosphoribosyltransferase (208 aa).

Residues arginine 77, arginine 102, and 128–136 contribute to the 5-phospho-alpha-D-ribose 1-diphosphate site; that span reads DPMLATGGT. Uracil contacts are provided by residues isoleucine 191 and 196-198; that span reads GDI. Aspartate 197 is a binding site for 5-phospho-alpha-D-ribose 1-diphosphate.

It belongs to the UPRTase family. Requires Mg(2+) as cofactor.

It catalyses the reaction UMP + diphosphate = 5-phospho-alpha-D-ribose 1-diphosphate + uracil. It functions in the pathway pyrimidine metabolism; UMP biosynthesis via salvage pathway; UMP from uracil: step 1/1. With respect to regulation, allosterically activated by GTP. Its function is as follows. Catalyzes the conversion of uracil and 5-phospho-alpha-D-ribose 1-diphosphate (PRPP) to UMP and diphosphate. This Aquifex aeolicus (strain VF5) protein is Uracil phosphoribosyltransferase.